Reading from the N-terminus, the 300-residue chain is Ribonuclease HIII (300 aa).

Positions 83–300 (IPIIGSDEVG…THKAQALLTK (218 aa)) constitute an RNase H type-2 domain. Asp-89, Glu-90, and Asp-194 together coordinate a divalent metal cation.

This sequence belongs to the RNase HII family. RnhC subfamily. Mn(2+) serves as cofactor. Mg(2+) is required as a cofactor.

Its subcellular location is the cytoplasm. The catalysed reaction is Endonucleolytic cleavage to 5'-phosphomonoester.. Its function is as follows. Endonuclease that specifically degrades the RNA of RNA-DNA hybrids. The chain is Ribonuclease HIII from Streptococcus pyogenes serotype M12 (strain MGAS2096).